Consider the following 69-residue polypeptide: uncharacterized protein (69 aa).

The chain crosses the membrane as a helical span at residues 13-35 (IRSINPTLLNFINYFLLIVPQFI).

It is found in the membrane. This is an uncharacterized protein from Saccharomyces cerevisiae (strain ATCC 204508 / S288c) (Baker's yeast).